Consider the following 400-residue polypeptide: Dual specificity mitogen-activated protein kinase kinase 2 (400 aa).

M1 is subject to N-acetylmethionine. S23 bears the Phosphoserine mark. The region spanning 72 to 369 (FERISELGAG…LKMLTNHTFI (298 aa)) is the Protein kinase domain. ATP-binding positions include 78 to 86 (LGAGNGGVV) and K101. Catalysis depends on D194, which acts as the Proton acceptor. (Microbial infection) O-acetylserine; by Yersinia YopJ; alternate is present on residues S222 and S226. A Phosphoserine; by RAF; alternate modification is found at S222. S226 is modified (phosphoserine; alternate). The disordered stretch occupies residues 286–310 (GEEGEPHSISPRPRPPGRPVSGHGM). Residues S293, S295, and S306 each carry the phosphoserine modification. A phosphothreonine mark is found at T394 and T396.

Belongs to the protein kinase superfamily. STE Ser/Thr protein kinase family. MAP kinase kinase subfamily. As to quaternary structure, interacts with MORG1. Interacts with SGK1. Interacts with KSR1. Interacts with KSR1 and BRAF; the interaction with KSR1 mediates KSR1-BRAF dimerization. Interacts with GLS. It depends on Mg(2+) as a cofactor. In terms of processing, MAPKK is itself dependent on Ser/Thr phosphorylation for activity catalyzed by MAP kinase kinase kinases (RAF or MEKK1). Phosphorylated by MAP2K1/MEK1. Post-translationally, (Microbial infection) Acetylation of Ser-222 and Ser-226 by Yersinia YopJ prevents phosphorylation and activation, thus blocking the MAPK signaling pathway.

Its subcellular location is the cytoplasm. It localises to the membrane. It carries out the reaction L-seryl-[protein] + ATP = O-phospho-L-seryl-[protein] + ADP + H(+). It catalyses the reaction L-threonyl-[protein] + ATP = O-phospho-L-threonyl-[protein] + ADP + H(+). The catalysed reaction is L-tyrosyl-[protein] + ATP = O-phospho-L-tyrosyl-[protein] + ADP + H(+). In terms of biological role, catalyzes the concomitant phosphorylation of a threonine and a tyrosine residue in a Thr-Glu-Tyr sequence located in MAP kinases. Activates the ERK1 and ERK2 MAP kinases. Activates BRAF in a KSR1 or KSR2-dependent manner; by binding to KSR1 or KSR2 releases the inhibitory intramolecular interaction between KSR1 or KSR2 protein kinase and N-terminal domains which promotes KSR1 or KSR2-BRAF dimerization and BRAF activation. In Homo sapiens (Human), this protein is Dual specificity mitogen-activated protein kinase kinase 2 (MAP2K2).